A 274-amino-acid chain; its full sequence is NH(3)-dependent NAD(+) synthetase (274 aa).

46-53 serves as a coordination point for ATP; that stretch reads GISGGQDS. Asp52 is a binding site for Mg(2+). Arg140 is a binding site for deamido-NAD(+). Thr160 serves as a coordination point for ATP. Glu165 contacts Mg(2+). 2 residues coordinate deamido-NAD(+): Lys173 and Asp180. ATP contacts are provided by Lys189 and Thr211. Residue 260–261 coordinates deamido-NAD(+); sequence HK.

It belongs to the NAD synthetase family. In terms of assembly, homodimer.

It carries out the reaction deamido-NAD(+) + NH4(+) + ATP = AMP + diphosphate + NAD(+) + H(+). It functions in the pathway cofactor biosynthesis; NAD(+) biosynthesis; NAD(+) from deamido-NAD(+) (ammonia route): step 1/1. Catalyzes the ATP-dependent amidation of deamido-NAD to form NAD. Uses ammonia as a nitrogen source. The sequence is that of NH(3)-dependent NAD(+) synthetase from Pectobacterium atrosepticum (strain SCRI 1043 / ATCC BAA-672) (Erwinia carotovora subsp. atroseptica).